The following is a 29-amino-acid chain: Galanin (29 aa).

Ala-29 carries the alanine amide modification.

This sequence belongs to the galanin family.

The protein localises to the secreted. In terms of biological role, contracts smooth muscle of the gastrointestinal and genitourinary tract, regulates growth hormone release, modulates insulin release, and may be involved in the control of adrenal secretion. The protein is Galanin (GAL) of Alligator mississippiensis (American alligator).